Reading from the N-terminus, the 216-residue chain is Kynurenine formamidase (216 aa).

Tryptophan 25 contributes to the substrate binding site. Residues histidine 55, histidine 59, and aspartate 61 each contribute to the Zn(2+) site. Histidine 65 (proton donor/acceptor) is an active-site residue. Residues histidine 167 and glutamate 179 each coordinate Zn(2+).

It belongs to the Cyclase 1 superfamily. KynB family. Homodimer. Zn(2+) serves as cofactor.

It catalyses the reaction N-formyl-L-kynurenine + H2O = L-kynurenine + formate + H(+). It participates in amino-acid degradation; L-tryptophan degradation via kynurenine pathway; L-kynurenine from L-tryptophan: step 2/2. Catalyzes the hydrolysis of N-formyl-L-kynurenine to L-kynurenine, the second step in the kynurenine pathway of tryptophan degradation. This Cupriavidus taiwanensis (strain DSM 17343 / BCRC 17206 / CCUG 44338 / CIP 107171 / LMG 19424 / R1) (Ralstonia taiwanensis (strain LMG 19424)) protein is Kynurenine formamidase.